Consider the following 864-residue polypeptide: Leucine--tRNA ligase (864 aa).

The 'HIGH' region motif lies at P57 to H67. The 'KMSKS' region motif lies at K628 to S632. Residue K631 coordinates ATP.

It belongs to the class-I aminoacyl-tRNA synthetase family.

It localises to the cytoplasm. The enzyme catalyses tRNA(Leu) + L-leucine + ATP = L-leucyl-tRNA(Leu) + AMP + diphosphate. The chain is Leucine--tRNA ligase from Prochlorococcus marinus (strain MIT 9515).